The following is a 526-amino-acid chain: ATP synthase subunit alpha (526 aa).

171–178 contacts ATP; that stretch reads GDRQTGKT.

Belongs to the ATPase alpha/beta chains family. As to quaternary structure, F-type ATPases have 2 components, CF(1) - the catalytic core - and CF(0) - the membrane proton channel. CF(1) has five subunits: alpha(3), beta(3), gamma(1), delta(1), epsilon(1). CF(0) has four main subunits: a(1), b(1), b'(1) and c(9-12).

The protein localises to the cell inner membrane. It carries out the reaction ATP + H2O + 4 H(+)(in) = ADP + phosphate + 5 H(+)(out). Produces ATP from ADP in the presence of a proton gradient across the membrane. The alpha chain is a regulatory subunit. The sequence is that of ATP synthase subunit alpha from Chlorobium phaeobacteroides (strain DSM 266 / SMG 266 / 2430).